A 674-amino-acid chain; its full sequence is NADH-quinone oxidoreductase subunit L (674 aa).

The next 16 helical transmembrane spans lie at 4-24 (MTLYLIIALVPLAGSLIAGLF), 36-56 (VTILGVAVSAVLSAYVLWGFI), 67-87 (VYTWLTMGGLDFSVGFLVDTM), 90-110 (MMMVVVTGVSLMVHIYTIGYM), 115-135 (VGYQRFFSYISLFTFSMLMLI), 140-160 (FIQLFFGWEAVGLVSYLLIGF), 180-200 (VGDFGFLLGIGLVLAYFGGSL), 219-239 (LFPGVEWSLITVTCLLLFVGA), 259-279 (PTPISALIHAATMVTAGLFMV), 293-313 (LSVIMVIGAITALFMGFLGVI), 348-368 (VMTHAFFKALLFLAAGSAIIG), 385-405 (MPVTWLTMLIGNLSLIGTPFF), 425-445 (GSGFAYFAVLASVFVTAFYAF), 488-508 (VVTLPLILLAVPSVIIGYIAI), 549-569 (LHSPVLYLAIAGVLSAWLLYV), and 653-673 (YAAAMVFGVLVLLGMTFWGLF).

Belongs to the complex I subunit 5 family.

The protein localises to the cell membrane. The catalysed reaction is a quinone + NADH + 5 H(+)(in) = a quinol + NAD(+) + 4 H(+)(out). Its function is as follows. NDH-1 shuttles electrons from NADH, via FMN and iron-sulfur (Fe-S) centers, to quinones in the respiratory chain. The immediate electron acceptor for the enzyme in this species is believed to be ubiquinone. Couples the redox reaction to proton translocation (for every two electrons transferred, four hydrogen ions are translocated across the cytoplasmic membrane), and thus conserves the redox energy in a proton gradient. The sequence is that of NADH-quinone oxidoreductase subunit L (nuoL) from Neisseria meningitidis serogroup B (strain ATCC BAA-335 / MC58).